Here is a 365-residue protein sequence, read N- to C-terminus: Alanine racemase (365 aa).

Lys32 acts as the Proton acceptor; specific for D-alanine in catalysis. Lys32 is modified (N6-(pyridoxal phosphate)lysine). Substrate is bound at residue Arg128. The active-site Proton acceptor; specific for L-alanine is Tyr257. Met305 is a substrate binding site.

The protein belongs to the alanine racemase family. The cofactor is pyridoxal 5'-phosphate.

It catalyses the reaction L-alanine = D-alanine. Its pathway is amino-acid biosynthesis; D-alanine biosynthesis; D-alanine from L-alanine: step 1/1. Catalyzes the interconversion of L-alanine and D-alanine. May also act on other amino acids. This Francisella philomiragia subsp. philomiragia (strain ATCC 25017 / CCUG 19701 / FSC 153 / O#319-036) protein is Alanine racemase (alr).